The chain runs to 457 residues: MKGFLGLALLPLLTAASPVSVESIHNGAAPIISSMNSQEIPDSYIVVFKKHVDTSAAAAHHSWVQDIHSAVNGRMELKKRGLFGFDTDAFLGVKHSFHVAGSLMGYAGHFHEDVIEQVRRHPDVDYIEKDSEVHHFDSPSVEKNAPWGLARISHRDSLSFGTFNKYLYAEDGGEGVDAYVIDTGTNTDHVDFEGRASWGKTIPQGDEDVDGNGHGTHCSGTIAGKKYGVAKKANVYAVKVLRSNGSGTMSDVVKGVEWAAEAHIKKSKAAKDGKAKGFKGSVANMSLGGGSSRTLDLAVNAAVDAGMHFAVAAGNDNADACNYSPAAAEKAVTVGASTLADERAYFSNYGKCTDIFAPGLNILSTWIGSKYAVNTISGTSMASPHIAGLLAYYVSLQPSDDSAFAVEKITPKKLKEALITVATSGALTDIPSDTPNLLAWNGGGSSNYTDIVAQGGY.

An N-terminal signal peptide occupies residues 1–16 (MKGFLGLALLPLLTAA). Residues 17–136 (SPVSVESIHN…IEKDSEVHHF (120 aa)) constitute a propeptide, removed in mature form. The 92-residue stretch at 43 to 134 (SYIVVFKKHV…DYIEKDSEVH (92 aa)) folds into the Inhibitor I9 domain. The region spanning 146–457 (PWGLARISHR…YTDIVAQGGY (312 aa)) is the Peptidase S8 domain. Active-site charge relay system residues include Asp182 and His214. Asn244 and Asn284 each carry an N-linked (GlcNAc...) asparagine glycan. Ser380 (charge relay system) is an active-site residue. A glycan (N-linked (GlcNAc...) asparagine) is linked at Asn447.

Belongs to the peptidase S8 family.

Functionally, serine protease. The protein is Subtilisin-like serine protease Pen c 2 of Penicillium citrinum.